A 297-amino-acid polypeptide reads, in one-letter code: ER membrane protein complex subunit 2 (297 aa).

A2 is modified (N-acetylalanine). TPR repeat units follow at residues 87–120, 155–188, and 192–225; these read HRVKRLTGMRFEAMERYDDAIQLYDRILQEDPTN, QEAWHELAELYINEHDYAKAAFCLEELMMTNPYN, and CQQYAEVKYTQGGLENLELSRKYFAQALKLNNRN. K255 carries the N6-acetyllysine modification.

The protein belongs to the EMC2 family. In terms of assembly, component of the ER membrane protein complex (EMC).

The protein resides in the endoplasmic reticulum membrane. Functionally, part of the endoplasmic reticulum membrane protein complex (EMC) that enables the energy-independent insertion into endoplasmic reticulum membranes of newly synthesized membrane proteins. Preferentially accommodates proteins with transmembrane domains that are weakly hydrophobic or contain destabilizing features such as charged and aromatic residues. Involved in the cotranslational insertion of multi-pass membrane proteins in which stop-transfer membrane-anchor sequences become ER membrane spanning helices. It is also required for the post-translational insertion of tail-anchored/TA proteins in endoplasmic reticulum membranes. By mediating the proper cotranslational insertion of N-terminal transmembrane domains in an N-exo topology, with translocated N-terminus in the lumen of the ER, controls the topology of multi-pass membrane proteins like the G protein-coupled receptors. By regulating the insertion of various proteins in membranes, it is indirectly involved in many cellular processes. This chain is ER membrane protein complex subunit 2, found in Bos taurus (Bovine).